A 61-amino-acid polypeptide reads, in one-letter code: uncharacterized protein (61 aa).

Its subcellular location is the mitochondrion. This is an uncharacterized protein from Marchantia polymorpha (Common liverwort).